Here is a 305-residue protein sequence, read N- to C-terminus: Ornithine carbamoyltransferase, anabolic (305 aa).

Residues 53–56, glutamine 80, arginine 104, and 131–134 each bind carbamoyl phosphate; these read STRT and HPCQ. Residues asparagine 162, aspartate 219, and 223-224 contribute to the L-ornithine site; that span reads SM. Residues 259–260 and arginine 287 contribute to the carbamoyl phosphate site; that span reads CL.

The protein belongs to the aspartate/ornithine carbamoyltransferase superfamily. OTCase family. In terms of assembly, homotrimer.

The protein localises to the cytoplasm. The catalysed reaction is carbamoyl phosphate + L-ornithine = L-citrulline + phosphate + H(+). The protein operates within amino-acid biosynthesis; L-arginine biosynthesis; L-arginine from L-ornithine and carbamoyl phosphate: step 1/3. Its function is as follows. Reversibly catalyzes the transfer of the carbamoyl group from carbamoyl phosphate (CP) to the N(epsilon) atom of ornithine (ORN) to produce L-citrulline, which is a substrate for argininosuccinate synthetase (ArgG) involved in the final step in arginine biosynthesis. This is Ornithine carbamoyltransferase, anabolic from Pseudomonas aeruginosa (strain ATCC 15692 / DSM 22644 / CIP 104116 / JCM 14847 / LMG 12228 / 1C / PRS 101 / PAO1).